The chain runs to 413 residues: ATP phosphoribosyltransferase 2, chloroplastic (413 aa).

The transit peptide at 1-57 (MPISIPLNATLQYSSPSSSSSSSSLVPSSPLFSPIPSTTVSLTGIRQRCLRMVTSCV) directs the protein to the chloroplast.

Belongs to the ATP phosphoribosyltransferase family. Long subfamily. Mg(2+) is required as a cofactor.

It is found in the plastid. The protein localises to the chloroplast. The enzyme catalyses 1-(5-phospho-beta-D-ribosyl)-ATP + diphosphate = 5-phospho-alpha-D-ribose 1-diphosphate + ATP. The protein operates within amino-acid biosynthesis; L-histidine biosynthesis; L-histidine from 5-phospho-alpha-D-ribose 1-diphosphate: step 1/9. Its activity is regulated as follows. Feedback inhibited by L-histidine. Catalyzes the condensation of ATP and 5-phosphoribose 1-diphosphate to form N'-(5'-phosphoribosyl)-ATP (PR-ATP). The polypeptide is ATP phosphoribosyltransferase 2, chloroplastic (HISN1B) (Arabidopsis thaliana (Mouse-ear cress)).